Reading from the N-terminus, the 288-residue chain is Phosphatidate cytidylyltransferase (288 aa).

A run of 7 helical transmembrane segments spans residues Ile10–Leu30, Pro52–Thr72, Leu89–Pro109, Asn118–Leu138, Gly152–Phe172, Trp192–Phe212, and Ile223–Thr243.

This sequence belongs to the CDS family.

The protein localises to the cell inner membrane. It catalyses the reaction a 1,2-diacyl-sn-glycero-3-phosphate + CTP + H(+) = a CDP-1,2-diacyl-sn-glycerol + diphosphate. It participates in phospholipid metabolism; CDP-diacylglycerol biosynthesis; CDP-diacylglycerol from sn-glycerol 3-phosphate: step 3/3. The sequence is that of Phosphatidate cytidylyltransferase (cdsA) from Haemophilus influenzae (strain ATCC 51907 / DSM 11121 / KW20 / Rd).